Here is a 519-residue protein sequence, read N- to C-terminus: Histidine ammonia-lyase (519 aa).

Positions 146-148 form a cross-link, 5-imidazolinone (Ala-Gly); sequence ASG. At serine 147 the chain carries 2,3-didehydroalanine (Ser).

This sequence belongs to the PAL/histidase family. Post-translationally, contains an active site 4-methylidene-imidazol-5-one (MIO), which is formed autocatalytically by cyclization and dehydration of residues Ala-Ser-Gly.

It localises to the cytoplasm. It carries out the reaction L-histidine = trans-urocanate + NH4(+). It functions in the pathway amino-acid degradation; L-histidine degradation into L-glutamate; N-formimidoyl-L-glutamate from L-histidine: step 1/3. In Bradyrhizobium diazoefficiens (strain JCM 10833 / BCRC 13528 / IAM 13628 / NBRC 14792 / USDA 110), this protein is Histidine ammonia-lyase.